The sequence spans 415 residues: Gamma-glutamyl phosphate reductase (415 aa).

This sequence belongs to the gamma-glutamyl phosphate reductase family.

It is found in the cytoplasm. It catalyses the reaction L-glutamate 5-semialdehyde + phosphate + NADP(+) = L-glutamyl 5-phosphate + NADPH + H(+). It participates in amino-acid biosynthesis; L-proline biosynthesis; L-glutamate 5-semialdehyde from L-glutamate: step 2/2. Functionally, catalyzes the NADPH-dependent reduction of L-glutamate 5-phosphate into L-glutamate 5-semialdehyde and phosphate. The product spontaneously undergoes cyclization to form 1-pyrroline-5-carboxylate. The chain is Gamma-glutamyl phosphate reductase from Listeria monocytogenes serotype 4a (strain HCC23).